The sequence spans 109 residues: Ribonuclease P protein component (109 aa).

It belongs to the RnpA family. In terms of assembly, consists of a catalytic RNA component (M1 or rnpB) and a protein subunit.

The catalysed reaction is Endonucleolytic cleavage of RNA, removing 5'-extranucleotides from tRNA precursor.. In terms of biological role, RNaseP catalyzes the removal of the 5'-leader sequence from pre-tRNA to produce the mature 5'-terminus. It can also cleave other RNA substrates such as 4.5S RNA. The protein component plays an auxiliary but essential role in vivo by binding to the 5'-leader sequence and broadening the substrate specificity of the ribozyme. This is Ribonuclease P protein component from Mycoplasma capricolum subsp. capricolum (strain California kid / ATCC 27343 / NCTC 10154).